The sequence spans 315 residues: Ribose-phosphate pyrophosphokinase (315 aa).

ATP is bound by residues 41-43 and 100-101; these read DGE and RQ. Positions 134 and 173 each coordinate Mg(2+). Residue Lys196 is part of the active site. D-ribose 5-phosphate contacts are provided by residues Arg198, Asp222, and 226 to 230; that span reads DTAGT.

This sequence belongs to the ribose-phosphate pyrophosphokinase family. Class I subfamily. Homohexamer. Mg(2+) serves as cofactor.

The protein localises to the cytoplasm. It carries out the reaction D-ribose 5-phosphate + ATP = 5-phospho-alpha-D-ribose 1-diphosphate + AMP + H(+). The protein operates within metabolic intermediate biosynthesis; 5-phospho-alpha-D-ribose 1-diphosphate biosynthesis; 5-phospho-alpha-D-ribose 1-diphosphate from D-ribose 5-phosphate (route I): step 1/1. Involved in the biosynthesis of the central metabolite phospho-alpha-D-ribosyl-1-pyrophosphate (PRPP) via the transfer of pyrophosphoryl group from ATP to 1-hydroxyl of ribose-5-phosphate (Rib-5-P). The polypeptide is Ribose-phosphate pyrophosphokinase (Bacillus caldolyticus).